The primary structure comprises 2291 residues: Protein Ycf2 B (2291 aa).

Position 1642-1649 (G1642–S1649) interacts with ATP.

It belongs to the Ycf2 family.

The protein localises to the plastid. It is found in the chloroplast stroma. Functionally, probable ATPase of unknown function. Its presence in a non-photosynthetic plant (Epifagus virginiana) and experiments in tobacco indicate that it has an essential function which is probably not related to photosynthesis. In Atropa belladonna (Belladonna), this protein is Protein Ycf2 B (ycf2-B).